Reading from the N-terminus, the 71-residue chain is MAFLKKSLFLVLFLALVPLSICEAEKREEENEEKQEDDDESEKKRGVVTDLLNTAGGLLGNLVGSLSGGER.

The N-terminal stretch at 1–22 (MAFLKKSLFLVLFLALVPLSIC) is a signal peptide. Positions 23–42 (EAEKREEENEEKQEDDDESE) are excised as a propeptide. The tract at residues 25 to 45 (EKREEENEEKQEDDDESEKKR) is disordered. Acidic residues predominate over residues 30–40 (ENEEKQEDDDE). Glycine amide is present on Gly-68. The propeptide occupies 70 to 71 (ER).

Belongs to the frog skin active peptide (FSAP) family. Plasticin subfamily. As to expression, expressed by the skin glands.

It localises to the secreted. It is found in the target cell membrane. Functionally, neutral peptide with no antimicrobial activity. Does not permeate bacterial membranes. May act in synergy with cationic peptides by enhancing their activity. Has a moderate hemolytic activity. It interacts with zwitterionic phospholipids (DMPC) without perturbing either the interface or inside of the bilayer, whereas it causes little perturbations at the interface peptide-anionic vesicles (DMPG) as well as in the bilayer alkyl chains. The protein is Plasticin-DA1 of Agalychnis dacnicolor (Giant Mexican leaf frog).